A 146-amino-acid chain; its full sequence is Probable calcium-binding protein CML32 (146 aa).

EF-hand domains follow at residues 1–33 (MSVA…FSPS), 34–69 (ITSE…GGEG), 73–108 (DEDI…LGEK), and 109–144 (QTIA…NNKK). Ca(2+) contacts are provided by Asp11, Asn13, Asp15, Lys17, Glu22, Asp47, Asp49, Asp51, Gln53, Glu58, Asp86, Asp88, Asp90, Lys92, Glu97, Asp122, Asp124, Asp126, and Glu133.

Potential calcium sensor. The polypeptide is Probable calcium-binding protein CML32 (CML32) (Arabidopsis thaliana (Mouse-ear cress)).